A 441-amino-acid chain; its full sequence is Maltose-6'-phosphate glucosidase MalH (441 aa).

Residue 4-70 (FSVVIAGGGS…PEIEFLATTN (67 aa)) coordinates NAD(+). Arginine 93 and asparagine 147 together coordinate substrate. Cysteine 169 contributes to the Mn(2+) binding site. Aspartate 170 (proton donor) is an active-site residue. Mn(2+) is bound at residue histidine 200. Tyrosine 264 serves as the catalytic Proton acceptor. Arginine 284 provides a ligand contact to substrate.

Homotetramer. NAD(+) serves as cofactor. The cofactor is Mn(2+).

The enzyme catalyses alpha-maltose 6'-phosphate + H2O = D-glucose 6-phosphate + D-glucose. Its function is as follows. Catalyzes the hydrolysis of O-alpha-linked disaccharide 6-phosphates, including maltose-6'P and all five phosphorylated isomers of sucrose, but not sucrose-6P. Does not hydrolyze beta-linked disaccharide 6-phosphates such as cellobiose-6'P and gentiobiose-6'P. Is involved in the dissimilation of maltose and related O-alpha-linked glucosides produced via the phosphoenolpyruvate-dependent sugar phosphotransferase system (PEP-PTS). The sequence is that of Maltose-6'-phosphate glucosidase MalH (malH) from Clostridium acetobutylicum (strain ATCC 824 / DSM 792 / JCM 1419 / IAM 19013 / LMG 5710 / NBRC 13948 / NRRL B-527 / VKM B-1787 / 2291 / W).